A 436-amino-acid polypeptide reads, in one-letter code: Phosphomethylpyrimidine synthase (436 aa).

Substrate is bound by residues asparagine 68, methionine 97, tyrosine 126, histidine 166, 188 to 190 (SRG), 229 to 232 (DGFR), and glutamate 268. Residue histidine 272 coordinates Zn(2+). Position 295 (tyrosine 295) interacts with substrate. Position 336 (histidine 336) interacts with Zn(2+). The [4Fe-4S] cluster site is built by cysteine 412, cysteine 415, and cysteine 419.

This sequence belongs to the ThiC family. As to quaternary structure, homodimer. [4Fe-4S] cluster is required as a cofactor.

The enzyme catalyses 5-amino-1-(5-phospho-beta-D-ribosyl)imidazole + S-adenosyl-L-methionine = 4-amino-2-methyl-5-(phosphooxymethyl)pyrimidine + CO + 5'-deoxyadenosine + formate + L-methionine + 3 H(+). It participates in cofactor biosynthesis; thiamine diphosphate biosynthesis. In terms of biological role, catalyzes the synthesis of the hydroxymethylpyrimidine phosphate (HMP-P) moiety of thiamine from aminoimidazole ribotide (AIR) in a radical S-adenosyl-L-methionine (SAM)-dependent reaction. This Geobacter metallireducens (strain ATCC 53774 / DSM 7210 / GS-15) protein is Phosphomethylpyrimidine synthase.